We begin with the raw amino-acid sequence, 483 residues long: Betaine aldehyde dehydrogenase (483 aa).

2 residues coordinate K(+): Ile-27 and Asp-93. 149 to 151 contacts NAD(+); that stretch reads GAW. The active-site Charge relay system is the Lys-161. 175–178 lines the NAD(+) pocket; it reads KPSE. Position 179 (Val-179) interacts with K(+). 228–231 provides a ligand contact to NAD(+); that stretch reads SVPT. Val-243 contributes to the K(+) binding site. Glu-249 acts as the Proton acceptor in catalysis. Residues Gly-251, Cys-283, and Glu-380 each coordinate NAD(+). Cys-283 serves as the catalytic Nucleophile. Cys-283 is modified (cysteine sulfenic acid (-SOH)). Residues Lys-450 and Gly-453 each contribute to the K(+) site. Residue Glu-457 is the Charge relay system of the active site.

The protein belongs to the aldehyde dehydrogenase family. Dimer of dimers. Requires K(+) as cofactor.

The catalysed reaction is betaine aldehyde + NAD(+) + H2O = glycine betaine + NADH + 2 H(+). The protein operates within amine and polyamine biosynthesis; betaine biosynthesis via choline pathway; betaine from betaine aldehyde: step 1/1. Involved in the biosynthesis of the osmoprotectant glycine betaine. Catalyzes the irreversible oxidation of betaine aldehyde to the corresponding acid. The chain is Betaine aldehyde dehydrogenase from Cereibacter sphaeroides (strain KD131 / KCTC 12085) (Rhodobacter sphaeroides).